Reading from the N-terminus, the 928-residue chain is Periplasmic nitrate reductase (928 aa).

Positions 1–33 (MAFSRREFLKSAAAASAASAVGMSVPSQLLAQA) form a signal peptide, tat-type signal. A 4Fe-4S Mo/W bis-MGD-type domain is found at 40–96 (WRWDKSVCRFCGTGCGIMVATKNDQIVAVKGDPAAPVNRGLNCIKGYFNAKIMYGAD). The [4Fe-4S] cluster site is built by Cys-47, Cys-50, Cys-54, and Cys-82. Residues Lys-84, Gln-152, Asn-177, Cys-181, 214–221 (WGANMAEM), 265–267 (QTD), Met-422, Gln-426, Asn-532, 557–558 (SD), Lys-580, Asp-607, and 818–827 (TGRVLEHWHS) contribute to the Mo-bis(molybdopterin guanine dinucleotide) site. Trp-894 lines the substrate pocket. Mo-bis(molybdopterin guanine dinucleotide) is bound by residues Asn-902 and Lys-919.

It belongs to the prokaryotic molybdopterin-containing oxidoreductase family. NasA/NapA/NarB subfamily. In terms of assembly, component of the periplasmic nitrate reductase NapAB complex composed of NapA and NapB. Requires [4Fe-4S] cluster as cofactor. Mo-bis(molybdopterin guanine dinucleotide) serves as cofactor. Post-translationally, predicted to be exported by the Tat system. The position of the signal peptide cleavage has not been experimentally proven.

It localises to the periplasm. The enzyme catalyses 2 Fe(II)-[cytochrome] + nitrate + 2 H(+) = 2 Fe(III)-[cytochrome] + nitrite + H2O. Catalytic subunit of the periplasmic nitrate reductase complex NapAB. Receives electrons from NapB and catalyzes the reduction of nitrate to nitrite. This chain is Periplasmic nitrate reductase, found in Wolinella succinogenes (strain ATCC 29543 / DSM 1740 / CCUG 13145 / JCM 31913 / LMG 7466 / NCTC 11488 / FDC 602W) (Vibrio succinogenes).